Here is a 348-residue protein sequence, read N- to C-terminus: Rhodopsin (348 aa).

At methionine 1 the chain carries N-acetylmethionine. The Extracellular portion of the chain corresponds to 1–36 (MNGTEGPNFYVPFSNKTGVVRSPFEYPQYYLAEPWQ). Residues asparagine 2 and asparagine 15 are each glycosylated (N-linked (GlcNAc...) asparagine). A helical membrane pass occupies residues 37-61 (FSMLAAYMFLLIVLGFPINFLTLYV). At 62 to 73 (TVQHKKLRTPLN) the chain is on the cytoplasmic side. Residues 74-96 (YILLNLAVADLFMVFGGFTTTLY) traverse the membrane as a helical segment. Residues 97-110 (TSLHGYFVFGPTGC) are Extracellular-facing. A disulfide bridge connects residues cysteine 110 and cysteine 187. A helical transmembrane segment spans residues 111–133 (NVEGFFATLGGEIALWSLVVLAI). The short motif at 134 to 136 (ERY) is the 'Ionic lock' involved in activated form stabilization element. Residues 134–152 (ERYVVVCKPMSNFRFGENH) are Cytoplasmic-facing. The chain crosses the membrane as a helical span at residues 153-173 (AIMGVAFTWVMALACAAPPLA). At 174 to 202 (GWSRYIPEGMQCSCGIDYYTLKPEINNES) the chain is on the extracellular side. Zn(2+) is bound at residue glutamate 201. The chain crosses the membrane as a helical span at residues 203–224 (FVIYMFVVHFAIPMIVIFFCYG). The Cytoplasmic segment spans residues 225–252 (QLVFTVKEAAAQQQESATTQKAEKEVTR). The helical transmembrane segment at 253–274 (MVIIMVIAFLICWVPYASVAFY) threads the bilayer. Over 275 to 286 (IFTHQGSDFGPI) the chain is Extracellular. Zn(2+) is bound at residue glutamine 279. A helical transmembrane segment spans residues 287 to 308 (FMTLPAFFAKSSSIYNPVIYIM). Position 296 is an N6-(retinylidene)lysine (lysine 296). Topologically, residues 309–348 (MNKQFRNCMITTLCCGKNPLGDDEASASASKTETSQVAPA) are cytoplasmic. 2 S-palmitoyl cysteine lipidation sites follow: cysteine 322 and cysteine 323. Positions 330–348 (DDEASASASKTETSQVAPA) are interaction with SAG. 2 positions are modified to phosphoserine: serine 334 and serine 338. 2 positions are modified to phosphothreonine: threonine 340 and threonine 342. A Phosphoserine modification is found at serine 343.

Belongs to the G-protein coupled receptor 1 family. Opsin subfamily. As to quaternary structure, homodimer. May form a complex composed of RHO, GRK1 and RCVRN in a Ca(2+)-dependent manner; RCVRN prevents the interaction between GRK1 and RHO. Interacts with GRK1. Interacts (phosphorylated form) with SAG. Interacts with GNAT1. Interacts with GNAT3. SAG and G-proteins compete for a common binding site. Interacts with PRCD; the interaction promotes PRCD stability. Forms a complex with ASAP1 and ARF4. Forms a complex with ASAP1, RAB11A, Rabin8/RAB3IP, ARF4 and RAB11FIP3; the complex regulates Golgi-to-cilia rhodopsin/RHO transport in photoreceptors. Phosphorylated on some or all of the serine and threonine residues present in the C-terminal region. In terms of processing, contains one covalently linked retinal chromophore. Upon light absorption, the covalently bound 11-cis-retinal is converted to all-trans-retinal. After hydrolysis of the Schiff base and release of the covalently bound all-trans-retinal, active rhodopsin is regenerated by binding of a fresh molecule of 11-cis-retinal.

The protein localises to the membrane. It localises to the cell projection. The protein resides in the cilium. Its subcellular location is the photoreceptor outer segment. Photoreceptor required for image-forming vision at low light intensity. Required for photoreceptor cell viability after birth. Light-induced isomerization of 11-cis to all-trans retinal triggers a conformational change that activates signaling via G-proteins. Subsequent receptor phosphorylation mediates displacement of the bound G-protein alpha subunit by the arrestin SAG and terminates signaling. This Canis lupus familiaris (Dog) protein is Rhodopsin (RHO).